The following is a 708-amino-acid chain: Leukotoxin translocation ATP-binding protein LktB (708 aa).

The Peptidase C39 domain maps to 1–126; the sequence is MEANHQRNDL…ACYQGQLILV (126 aa). An ABC transmembrane type-1 domain is found at 155–437; it reads FLETLIVSIF…LAQLWQDFQQ (283 aa). Helical transmembrane passes span 159–179, 192–212, 270–290, 296–316, and 389–409; these read LIVS…FQVV, LNII…LSGL, ALTS…MWYY, LVIL…SPIL, and VMVI…LSIG. In terms of domain architecture, ABC transporter spans 469-704; the sequence is ISFKNIRFRY…SNGLYSYLHQ (236 aa). ATP is bound at residue 503-510; sequence GRSGSGKS.

The protein belongs to the ABC transporter superfamily. Protein-1 exporter (TC 3.A.1.109) family. Homodimer.

The protein resides in the cell inner membrane. The enzyme catalyses ATP + H2O + proteinSide 1 = ADP + phosphate + proteinSide 2.. In terms of biological role, part of the ABC transporter complex LktBD involved in leukotoxin export. Transmembrane domains (TMD) form a pore in the inner membrane and the ATP-binding domain (NBD) is responsible for energy generation. In Mannheimia haemolytica (Pasteurella haemolytica), this protein is Leukotoxin translocation ATP-binding protein LktB (lktB).